The following is a 157-amino-acid chain: Transcription elongation factor GreA (157 aa).

Residues 12 to 74 are a coiled coil; sequence LKKLEEELEY…TLEAMLKNAK (63 aa).

The protein belongs to the GreA/GreB family.

Its function is as follows. Necessary for efficient RNA polymerase transcription elongation past template-encoded arresting sites. The arresting sites in DNA have the property of trapping a certain fraction of elongating RNA polymerases that pass through, resulting in locked ternary complexes. Cleavage of the nascent transcript by cleavage factors such as GreA or GreB allows the resumption of elongation from the new 3'terminus. GreA releases sequences of 2 to 3 nucleotides. This chain is Transcription elongation factor GreA, found in Caldanaerobacter subterraneus subsp. tengcongensis (strain DSM 15242 / JCM 11007 / NBRC 100824 / MB4) (Thermoanaerobacter tengcongensis).